Consider the following 217-residue polypeptide: Large ribosomal subunit protein uL3 (217 aa).

A compositionally biased stretch (polar residues) spans 134 to 146 (GRATHGNSRSHNV). The disordered stretch occupies residues 134–154 (GRATHGNSRSHNVPGSIGMAQ). Position 154 is an N5-methylglutamine (Gln-154).

It belongs to the universal ribosomal protein uL3 family. As to quaternary structure, part of the 50S ribosomal subunit. Forms a cluster with proteins L14 and L19. In terms of processing, methylated by PrmB.

One of the primary rRNA binding proteins, it binds directly near the 3'-end of the 23S rRNA, where it nucleates assembly of the 50S subunit. This is Large ribosomal subunit protein uL3 from Burkholderia cenocepacia (strain HI2424).